A 150-amino-acid polypeptide reads, in one-letter code: Small ribosomal subunit protein uS15 (150 aa).

Positions 1–10 are enriched in basic residues; the sequence is MPHRSRHKRG. The disordered stretch occupies residues 1–21; that stretch reads MPHRSRHKRGSSGSVRPATKT.

Belongs to the universal ribosomal protein uS15 family. As to quaternary structure, part of the 30S ribosomal subunit.

The polypeptide is Small ribosomal subunit protein uS15 (Caldivirga maquilingensis (strain ATCC 700844 / DSM 13496 / JCM 10307 / IC-167)).